The chain runs to 185 residues: Elongation factor P (185 aa).

This sequence belongs to the elongation factor P family.

Its subcellular location is the cytoplasm. It participates in protein biosynthesis; polypeptide chain elongation. Functionally, involved in peptide bond synthesis. Stimulates efficient translation and peptide-bond synthesis on native or reconstituted 70S ribosomes in vitro. Probably functions indirectly by altering the affinity of the ribosome for aminoacyl-tRNA, thus increasing their reactivity as acceptors for peptidyl transferase. This Fervidobacterium nodosum (strain ATCC 35602 / DSM 5306 / Rt17-B1) protein is Elongation factor P.